The following is a 369-amino-acid chain: tRNA/tmRNA (uracil-C(5))-methyltransferase (369 aa).

5 residues coordinate S-adenosyl-L-methionine: Q190, Y218, N223, E239, and D301. C326 acts as the Nucleophile in catalysis. Catalysis depends on E360, which acts as the Proton acceptor.

This sequence belongs to the class I-like SAM-binding methyltransferase superfamily. RNA M5U methyltransferase family. TrmA subfamily.

It carries out the reaction uridine(54) in tRNA + S-adenosyl-L-methionine = 5-methyluridine(54) in tRNA + S-adenosyl-L-homocysteine + H(+). The catalysed reaction is uridine(341) in tmRNA + S-adenosyl-L-methionine = 5-methyluridine(341) in tmRNA + S-adenosyl-L-homocysteine + H(+). Its function is as follows. Dual-specificity methyltransferase that catalyzes the formation of 5-methyluridine at position 54 (m5U54) in all tRNAs, and that of position 341 (m5U341) in tmRNA (transfer-mRNA). The sequence is that of tRNA/tmRNA (uracil-C(5))-methyltransferase from Vibrio vulnificus (strain YJ016).